Reading from the N-terminus, the 291-residue chain is Small ribosomal subunit biogenesis GTPase RsgA (291 aa).

Residues 63 to 221 (HNELKRPPVS…IADTPGFSAL (159 aa)) enclose the CP-type G domain. GTP contacts are provided by residues 112-115 (TKKD) and 164-172 (GQSGVGKST). 4 residues coordinate Zn(2+): C245, C250, H252, and C258.

Belongs to the TRAFAC class YlqF/YawG GTPase family. RsgA subfamily. In terms of assembly, monomer. Associates with 30S ribosomal subunit, binds 16S rRNA. Zn(2+) is required as a cofactor.

The protein localises to the cytoplasm. One of several proteins that assist in the late maturation steps of the functional core of the 30S ribosomal subunit. Helps release RbfA from mature subunits. May play a role in the assembly of ribosomal proteins into the subunit. Circularly permuted GTPase that catalyzes slow GTP hydrolysis, GTPase activity is stimulated by the 30S ribosomal subunit. In Staphylococcus haemolyticus (strain JCSC1435), this protein is Small ribosomal subunit biogenesis GTPase RsgA.